Here is a 70-residue protein sequence, read N- to C-terminus: Beta-defensin 107A (70 aa).

The N-terminal stretch at 1-26 (MPGAMKIFFFIFAALILLAQIFQART) is a signal peptide. Intrachain disulfides connect cysteine 41-cysteine 55 and cysteine 45-cysteine 64.

It belongs to the beta-defensin family.

The protein localises to the secreted. Has antibacterial activity. The protein is Beta-defensin 107A (DEFB107A) of Pan troglodytes (Chimpanzee).